The following is a 293-amino-acid chain: Protein bcp-1 (293 aa).

Basic and acidic residues predominate over residues 1–12; it reads MGKKRSREEAQK. Residues 1-35 are disordered; sequence MGKKRSREEAQKEVVQNDPTVDKMDEDSDSSDSDE. Over residues 24–35 the composition is skewed to acidic residues; it reads MDEDSDSSDSDE.

This sequence belongs to the BCP1 family.

Its subcellular location is the cytoplasm. The protein localises to the nucleus. Functionally, involved in nuclear export, actin cytoskeleton organization and vesicular transport. The protein is Protein bcp-1 (bcp-1) of Neurospora crassa (strain ATCC 24698 / 74-OR23-1A / CBS 708.71 / DSM 1257 / FGSC 987).